The following is a 661-amino-acid chain: Probable potassium transport system protein Kup 1 (661 aa).

Residues 1–11 (MKGLFPAGGGN) are compositionally biased toward gly residues. Residues 1–38 (MKGLFPAGGGNPPSSYLSRFLPHRKERSPENVTSGRNG) form a disordered region. Transmembrane regions (helical) follow at residues 48–68 (LALGALGIVYGDIGTSPLYTI), 85–105 (IMGVLSLILWSLTMVVSIKYI), 139–159 (AVVVMAALTGAALLYGDGFIT), 177–197 (AAKNLIVPLACGILLGLFLVQ), 207–227 (IFGPVMLVWFATIATLGLLCI), 251–271 (VHGLVVLGSVVLSITGGEALY), 286–306 (WFAMVFPSLLLNYFGQGAALL), 324–344 (LLLPMVALATMASIIASQAMI), 384–404 (LMMVVCIGLVLVFRASSGLAG), 405–425 (AYGVAVTANMAITSVVYFFVA), 436–456 (TAPLVGLFLVFDITYFGSNLL), and 458–478 (FFDGGWFPLAVALVIVIVMAS).

It belongs to the HAK/KUP transporter (TC 2.A.72) family.

The protein resides in the cell inner membrane. It carries out the reaction K(+)(in) + H(+)(in) = K(+)(out) + H(+)(out). Transport of potassium into the cell. Likely operates as a K(+):H(+) symporter. The sequence is that of Probable potassium transport system protein Kup 1 from Syntrophobacter fumaroxidans (strain DSM 10017 / MPOB).